The primary structure comprises 358 residues: 3-O-methylredipecamine 2-O-methyltransferase IpeOMT3 (358 aa).

Residues Gly-193, Asp-216, Asp-236, Met-237, and Lys-250 each contribute to the S-adenosyl-L-methionine site. The active-site Proton acceptor is the His-254.

The protein belongs to the class I-like SAM-binding methyltransferase superfamily. Cation-independent O-methyltransferase family. Expressed in roots.

It localises to the cytoplasm. It is found in the cytosol. It catalyses the reaction (S)-reticuline + S-adenosyl-L-methionine = (S)-laudanine + S-adenosyl-L-homocysteine + H(+). The protein operates within alkaloid biosynthesis. In terms of biological role, O-methyltransferase involved in the biosynthesis of ipecac and benzylisoquinoline monoterpenoid-isoquinoline alkaloids natural products, starting by the condensation of dopamine and secologanin, and including emetine and cephaeline, drugs used both as anti-protozoal (e.g. treatment of ameobiasis) and as emetic agents. Catalyzes 2-O-methylation of 3-O-methylredipecamine and, with less efficiency, the 7-O-methylation of (S)-coclaurine, (R,S)-N-methylcoclaurine, (R,S)-4'-O-methylcoclaurine, (R,S)-6-O-methyllaudanosoline, nororientaline, (S)-norreticuline and (S)-reticuline. The polypeptide is 3-O-methylredipecamine 2-O-methyltransferase IpeOMT3 (Carapichea ipecacuanha (Ipecac)).